We begin with the raw amino-acid sequence, 680 residues long: MSHPPIQTATLSWNEQGTPVSEQFGDIYFSNEDGLEETHYVFLKGNGFPERFALHPRDNCVFAETGFGTGLNFLTLWRDFAQFRQLHPAAKLQRLHYISFEKYPLQVADLAAAHQRWPELACFAEQLRAQWPLPLAGCHRILLAEGAITLDLWFGDVNTLLPQLDSSLNNQVDAWFLDGFAPAKNPDMWNDVLFNAMARMARPGGTFATFTAAGFVRRGLQQAGFDVAKIKGFGQKREMLTGILPQRLNTQSEPWYHRPLATRCDDIAIIGGGIVSALTALALLRRSAKVTLYCADALPAQGASGNRQGALYPLLNGKNDALEIFFTSAFTFARRQYSQLLEQGIRFDHQWCGVSQLAFDEKSRGKINKMLQTDWPPQLAAAMSREQLSALAGLDCAHDGIHYPAGGWLCPSDLTTALMALAQQLGMTCHYGHELCQLERVDGLWQLIFTSPQVNRQHTTVVLATGHRLPEWQQTQHLPLSAVRGQVSHIPTTPVLSQLRQVLCYDGYLTPVNPANQHHCIGASYQRGDVTTDFRADEQQENRDRLLRCLPDVSWPQQVDISDNQARCGVRCAIRDHLPMVGAVPDYSATLAQYQDLPRKIQHGEDIPLAPVWPELFMVGALGSRGLCSAPLVAEILAAQMFGEPQPLDTTTLAALNPNRFWIRKLLKGRPVQQRVSVLS.

The tract at residues 1 to 245 is tRNA (mnm(5)s(2)U34)-methyltransferase; that stretch reads MSHPPIQTAT…KREMLTGILP (245 aa). An FAD-dependent cmnm(5)s(2)U34 oxidoreductase region spans residues 270–680; sequence IGGGIVSALT…PVQQRVSVLS (411 aa).

In the N-terminal section; belongs to the methyltransferase superfamily. tRNA (mnm(5)s(2)U34)-methyltransferase family. The protein in the C-terminal section; belongs to the DAO family. FAD is required as a cofactor.

The protein localises to the cytoplasm. It catalyses the reaction 5-aminomethyl-2-thiouridine(34) in tRNA + S-adenosyl-L-methionine = 5-methylaminomethyl-2-thiouridine(34) in tRNA + S-adenosyl-L-homocysteine + H(+). In terms of biological role, catalyzes the last two steps in the biosynthesis of 5-methylaminomethyl-2-thiouridine (mnm(5)s(2)U) at the wobble position (U34) in tRNA. Catalyzes the FAD-dependent demodification of cmnm(5)s(2)U34 to nm(5)s(2)U34, followed by the transfer of a methyl group from S-adenosyl-L-methionine to nm(5)s(2)U34, to form mnm(5)s(2)U34. This is tRNA 5-methylaminomethyl-2-thiouridine biosynthesis bifunctional protein MnmC from Yersinia enterocolitica serotype O:8 / biotype 1B (strain NCTC 13174 / 8081).